Consider the following 617-residue polypeptide: Tetratricopeptide repeat protein 39B (617 aa).

TPR repeat units lie at residues 328 to 361 (SLIL…QEEW), 520 to 553 (CLVK…EKLL), and 561 to 594 (PFTL…YKDY).

It belongs to the TTC39 family. In terms of tissue distribution, high expression in lung and spleen. Low lower expression in liver and small intestine. Weak expression in heart, brain, kidney, adipose, and adrenal gland.

Functionally, regulates high density lipoprotein (HDL) cholesterol metabolism by promoting the ubiquitination and degradation of the oxysterols receptors LXR (NR1H2 and NR1H3). In Mus musculus (Mouse), this protein is Tetratricopeptide repeat protein 39B.